The sequence spans 163 residues: NADH-quinone oxidoreductase subunit I (163 aa).

4Fe-4S ferredoxin-type domains are found at residues 53–83 (LRRYPNGEERCIACKLCEAICPAQAITIEAG) and 94–123 (VRYDIDMVKCIYCGFCQEACPVDAIVEGPN). Positions 63, 66, 69, 73, 103, 106, 109, and 113 each coordinate [4Fe-4S] cluster.

This sequence belongs to the complex I 23 kDa subunit family. In terms of assembly, NDH-1 is composed of 14 different subunits. Subunits NuoA, H, J, K, L, M, N constitute the membrane sector of the complex. The cofactor is [4Fe-4S] cluster.

The protein localises to the cell inner membrane. The enzyme catalyses a quinone + NADH + 5 H(+)(in) = a quinol + NAD(+) + 4 H(+)(out). In terms of biological role, NDH-1 shuttles electrons from NADH, via FMN and iron-sulfur (Fe-S) centers, to quinones in the respiratory chain. The immediate electron acceptor for the enzyme in this species is believed to be ubiquinone. Couples the redox reaction to proton translocation (for every two electrons transferred, four hydrogen ions are translocated across the cytoplasmic membrane), and thus conserves the redox energy in a proton gradient. This Brucella abortus (strain S19) protein is NADH-quinone oxidoreductase subunit I.